The sequence spans 695 residues: MRRFLLLYATQRGQAKAIAEEISEKAVTYGFSADLHCISESDKYDLKTETAPLVMVVSTTGNGDPPDTARKFVKAIKDKTLPPDFLAHLRYGLLGLGDSEYTYFCNGGKVIDKRLQELGAQRFYDTGHADDCVGLELVVEPWINGLWAALEKHFLSNRGREDTSETLTMASHASRDAVTPELLHVESQVGLLKLDDSGGKAAKVLEQNAVNSNQSSTLIVDFEASLTHSVPPLSQASLNIPSLPPEYLEVHLEEALGQEESHASVSLVDPVFHVPVSKAVQLTTNDAIKTTLLIELDISKTDFSYQPGDAFNVICPNSDSEVQFLLQRLQLADRREHHVAVTIKADTRKKGAALPQHVPERCSLQFLLTWCLEIRAVPKKAFLRALADHTGDSAERRRLQELCSRQGAADYTRFVREAGACLSDLLRAFPSCQPPLGLLLEHLPKLQPRPYSCASSSLFHPGKLHFIFNIVEFLSNTTEVILRRGVCTGWLATLVESILQPYMCANHVDGKKALAPKISISPRTTNSFHLPDDPSVPIIMVGPGAGVAPFIGFLQHREKLQEQHPGGHFGATWLFFGCRHKERDYLFRDELRHFLKCGVLTHLEVSFSRDVAVGEEEGPAKYVQDSLQRHSKQVAGVLLQDSGYVYVCGDAKNMAKDVHDALVEIISRETGVEKLEAMKTLATLKEEKRYLQDIW.

The region spanning 4-147 is the Flavodoxin-like domain; that stretch reads FLLLYATQRG…VVEPWINGLW (144 aa). FMN contacts are provided by residues 10 to 14 and 93 to 124; these read TQRGQ and LLGLGDSEYTYFCNGGKVIDKRLQELGAQRFY. Residues 166–245 form a hinge region; that stretch reads TLTMASHASR…ASLNIPSLPP (80 aa). Phosphoserine is present on residues Ser171 and Ser187. The region spanning 269 to 531 is the FAD-binding FR-type domain; it reads DPVFHVPVSK…PRTTNSFHLP (263 aa). Lys289 contacts NADP(+). FAD contacts are provided by residues 449-452 and 485-488; these read RPYS and GVCT. NADP(+) contacts are provided by residues 608–609, 622–624, and Asp657; these read SR and YVQ. Residue Trp695 coordinates FAD.

Forms a multiprotein complex with MMACHC, MMADHC and MTR. FAD serves as cofactor. Requires FMN as cofactor.

The protein localises to the cytoplasm. It catalyses the reaction 2 methylcob(III)alamin-[methionine synthase] + 2 S-adenosyl-L-homocysteine + NADP(+) + H(+) = 2 cob(II)alamin-[methionine synthase] + 2 S-adenosyl-L-methionine + NADPH. The enzyme catalyses 2 cob(II)alamin + A + 2 H2O + 2 H(+) = 2 aquacob(III)alamin + AH2. Functionally, key enzyme in methionine and folate homeostasis responsible for the reactivation of methionine synthase (MTR/MS) activity by catalyzing the reductive methylation of MTR-bound cob(II)alamin. Cobalamin (vitamin B12) forms a complex with MTR to serve as an intermediary in methyl transfer reactions that cycles between MTR-bound methylcob(III)alamin and MTR bound-cob(I)alamin forms, and occasional oxidative escape of the cob(I)alamin intermediate during the catalytic cycle leads to the inactive cob(II)alamin species. The processing of cobalamin in the cytosol occurs in a multiprotein complex composed of at least MMACHC, MMADHC, MTRR and MTR which may contribute to shuttle safely and efficiently cobalamin towards MTR in order to produce methionine. Also necessary for the utilization of methyl groups from the folate cycle, thereby affecting transgenerational epigenetic inheritance. Also acts as a molecular chaperone for methionine synthase by stabilizing apoMTR and incorporating methylcob(III)alamin into apoMTR to form the holoenzyme. Also serves as an aquacob(III)alamin reductase by reducing aquacob(III)alamin to cob(II)alamin; this reduction leads to stimulation of the conversion of apoMTR and aquacob(III)alamin to MTR holoenzyme. This Bos taurus (Bovine) protein is Methionine synthase reductase (MTRR).